Consider the following 414-residue polypeptide: Glucose-1-phosphate adenylyltransferase (414 aa).

Residues glycine 164, 181–182, and serine 199 contribute to the alpha-D-glucose 1-phosphate site; that span reads EK.

Belongs to the bacterial/plant glucose-1-phosphate adenylyltransferase family. Homotetramer.

It carries out the reaction alpha-D-glucose 1-phosphate + ATP + H(+) = ADP-alpha-D-glucose + diphosphate. Its pathway is glycan biosynthesis; glycogen biosynthesis. Involved in the biosynthesis of ADP-glucose, a building block required for the elongation reactions to produce glycogen. Catalyzes the reaction between ATP and alpha-D-glucose 1-phosphate (G1P) to produce pyrophosphate and ADP-Glc. The chain is Glucose-1-phosphate adenylyltransferase from Kocuria rhizophila (strain ATCC 9341 / DSM 348 / NBRC 103217 / DC2201).